An 807-amino-acid chain; its full sequence is F-box protein YLR352W (807 aa).

The F-box domain occupies 220 to 266; sequence LNDCIDLPSHVLWKILKMLPELQKLDLSHTSIDDSTLYHGIPHWKNL. Positions 607–616 are enriched in basic and acidic residues; it reads DNNSHVEDSQ. Disordered regions lie at residues 607–647 and 716–739; these read DNNS…NPFA and HLFE…EHSS. 2 stretches are compositionally biased toward polar residues: residues 627–644 and 723–736; these read SLLS…SSAN and SRSG…LTGE.

In terms of assembly, interacts with SKP1 and CDC53. Component of the probable SCF(YBR352W) complex containing CDC53, SKP1, RBX1 and YBR352W.

It participates in protein modification; protein ubiquitination. Functionally, substrate recognition component of a SCF (SKP1-CUL1-F-box protein) E3 ubiquitin-protein ligase complex which mediates the ubiquitination and subsequent proteasomal degradation of target proteins. Probably recognizes and binds to phosphorylated target proteins. The chain is F-box protein YLR352W from Saccharomyces cerevisiae (strain ATCC 204508 / S288c) (Baker's yeast).